Reading from the N-terminus, the 139-residue chain is Gastrula zinc finger protein XlCGF67.1 (139 aa).

5 C2H2-type zinc fingers span residues Val-6–His-28, Tyr-33–His-55, Tyr-61–His-83, Phe-89–His-111, and Phe-117–His-139.

It belongs to the krueppel C2H2-type zinc-finger protein family.

The protein resides in the nucleus. May be involved in transcriptional regulation. This Xenopus laevis (African clawed frog) protein is Gastrula zinc finger protein XlCGF67.1.